We begin with the raw amino-acid sequence, 388 residues long: Amylovoran biosynthesis protein AmsL (388 aa).

6 helical membrane passes run 24 to 44 (VLLS…ISWF), 47 to 67 (LPQL…LGSL), 97 to 117 (FTVI…LGLF), 231 to 251 (FVIM…SPVI), 297 to 317 (FYWN…VWIW), and 359 to 379 (ISVS…NLFI).

It belongs to the polysaccharide synthase family.

It is found in the cell membrane. It functions in the pathway glycan metabolism; exopolysaccharide biosynthesis. Functionally, involved in the biosynthesis of amylovoran which functions as a virulence factor. The protein is Amylovoran biosynthesis protein AmsL (amsL) of Erwinia amylovora (Fire blight bacteria).